Reading from the N-terminus, the 181-residue chain is 3-hexulose-6-phosphate isomerase (181 aa).

Residues 27 to 168 enclose the SIS domain; sequence ILSLVDAAGR…IAKLVDQKGL (142 aa). Residues S45 and 84-89 contribute to the substrate site; that span reads SGSGST. E148 functions as the Proton acceptor in the catalytic mechanism.

Belongs to the SIS family. PHI subfamily. Homodimer.

It carries out the reaction D-arabino-hex-3-ulose 6-phosphate = beta-D-fructose 6-phosphate. The protein operates within one-carbon metabolism; formaldehyde assimilation via RuMP pathway; D-fructose 6-phosphate from D-ribulose 5-phosphate and formaldehyde: step 2/2. Catalyzes the isomerization between 3-hexulose 6-phosphate and fructose 6-phosphate. This Methylomonas aminofaciens protein is 3-hexulose-6-phosphate isomerase (rmpB).